Reading from the N-terminus, the 388-residue chain is Succinate--CoA ligase [ADP-forming] subunit beta (388 aa).

In terms of domain architecture, ATP-grasp spans 9-244 (KQLFARYGLP…QSQEDPREAQ (236 aa)). ATP is bound by residues lysine 46, 53-55 (GRG), glutamate 99, threonine 102, and glutamate 107. Mg(2+)-binding residues include asparagine 199 and aspartate 213. Residues asparagine 264 and 321-323 (GIV) each bind substrate.

Belongs to the succinate/malate CoA ligase beta subunit family. In terms of assembly, heterotetramer of two alpha and two beta subunits. Requires Mg(2+) as cofactor.

It carries out the reaction succinate + ATP + CoA = succinyl-CoA + ADP + phosphate. It catalyses the reaction GTP + succinate + CoA = succinyl-CoA + GDP + phosphate. It functions in the pathway carbohydrate metabolism; tricarboxylic acid cycle; succinate from succinyl-CoA (ligase route): step 1/1. Functionally, succinyl-CoA synthetase functions in the citric acid cycle (TCA), coupling the hydrolysis of succinyl-CoA to the synthesis of either ATP or GTP and thus represents the only step of substrate-level phosphorylation in the TCA. The beta subunit provides nucleotide specificity of the enzyme and binds the substrate succinate, while the binding sites for coenzyme A and phosphate are found in the alpha subunit. The sequence is that of Succinate--CoA ligase [ADP-forming] subunit beta from Enterobacter sp. (strain 638).